The following is a 105-amino-acid chain: Large ribosomal subunit protein uL24 (105 aa).

The protein belongs to the universal ribosomal protein uL24 family. As to quaternary structure, part of the 50S ribosomal subunit.

Its function is as follows. One of two assembly initiator proteins, it binds directly to the 5'-end of the 23S rRNA, where it nucleates assembly of the 50S subunit. In terms of biological role, one of the proteins that surrounds the polypeptide exit tunnel on the outside of the subunit. The chain is Large ribosomal subunit protein uL24 from Buchnera aphidicola subsp. Cinara cedri (strain Cc).